The chain runs to 356 residues: Leucine carboxyl methyltransferase 1 (356 aa).

Residues Arg78, Gly101, Asp127, 183-184 (DL), and Glu218 contribute to the S-adenosyl-L-methionine site.

The protein belongs to the methyltransferase superfamily. LCMT family.

The catalysed reaction is [phosphatase 2A protein]-C-terminal L-leucine + S-adenosyl-L-methionine = [phosphatase 2A protein]-C-terminal L-leucine methyl ester + S-adenosyl-L-homocysteine. Methylates the carboxyl group of the C-terminal leucine residue of protein phosphatase 2A catalytic subunits to form alpha-leucine ester residues. This Cryptococcus neoformans var. neoformans serotype D (strain JEC21 / ATCC MYA-565) (Filobasidiella neoformans) protein is Leucine carboxyl methyltransferase 1 (PPM1).